A 644-amino-acid chain; its full sequence is Exoribonuclease 2 (644 aa).

An RNB domain is found at 189-516 (RQDLTALNFV…NHRLLKAVIK (328 aa)). The S1 motif domain maps to 561–643 (NTRFAAEIID…ETRSIIARPA (83 aa)).

This sequence belongs to the RNR ribonuclease family. RNase II subfamily.

The protein resides in the cytoplasm. It carries out the reaction Exonucleolytic cleavage in the 3'- to 5'-direction to yield nucleoside 5'-phosphates.. In terms of biological role, involved in mRNA degradation. Hydrolyzes single-stranded polyribonucleotides processively in the 3' to 5' direction. The chain is Exoribonuclease 2 from Salmonella dublin (strain CT_02021853).